The following is a 322-amino-acid chain: Nodulation protein D 1 (322 aa).

In terms of domain architecture, HTH lysR-type spans 6-63; sequence LDLNLLVALDALMTERKLTAAARSINLSQPAMSAAITRLRTYFRDELFTMNGRELVPT. Positions 23 to 42 form a DNA-binding region, H-T-H motif; the sequence is LTAAARSINLSQPAMSAAIT.

Belongs to the LysR transcriptional regulatory family.

In terms of biological role, regulates the expression of the nod abcFE genes which encode other nodulation proteins. NodD is also a negative regulator of its own expression. Binds flavonoids as inducers. This is Nodulation protein D 1 (nodD1) from Sinorhizobium fredii (strain NBRC 101917 / NGR234).